Consider the following 648-residue polypeptide: Leucine-rich repeat transmembrane protein FLRT3 (648 aa).

The signal sequence occupies residues 1–28 (MSTETWNLFVAWAQLLLLFRISPQYVNA). Topologically, residues 29–527 (KPCPSVCRCD…KEPYKNSSLP (499 aa)) are extracellular. Positions 30–62 (PCPSVCRCDGGFIYCNDRDLTSIPSGIPDDATT) constitute an LRRNT domain. Intrachain disulfides connect cysteine 31–cysteine 37 and cysteine 35–cysteine 44. LRR repeat units follow at residues 58–82 (DDATTLYLQNNQINNAGIPSDLRGL), 83–105 (DKVERIYLYRNSLDEFPINLPKN), 107–126 (KELHLQENNIRTITYDALSQ), 127–152 (IPSIEELHLDDNSVSAVSIEDGAFRD), 154–179 (IFLRLLFLSRNHLSTIPWGLPRTIEE), 181–197 (RLDDNRISTIAEISLQD), 198–223 (LTNLKRLVLDGNLLNNNGLGERVFMN), 225–246 (INLTELSLVRNSLTSPPANLPG), 247–269 (TNLRKLYLQENHMNYVPPNAFAD), and 270–293 (LTQLYRLDMSNNNITALPQGIFDD). N-linked (GlcNAc...) asparagine glycosylation occurs at asparagine 226. The 52-residue stretch at 305 to 356 (NPWYCGCKMKWVRDWLQSLPSKVNVRGLMCQAPERVRGMTIKDLNKELFDCK) folds into the LRRCT domain. An intrachain disulfide couples cysteine 309 to cysteine 334. Residues 409-503 (KIITIQVKSI…VCIETETAPL (95 aa)) enclose the Fibronectin type-III domain. Residues 528–548 (LAAIIGGAVALVAITLLALVC) form a helical membrane-spanning segment. The Cytoplasmic portion of the chain corresponds to 549-648 (WYVHRNGSLF…GIPDSDHSHS (100 aa)). Residues 624-633 (NSHSESSSNR) show a composition bias toward low complexity. Residues 624–648 (NSHSESSSNRSYRDSGIPDSDHSHS) are disordered.

As to quaternary structure, interacts with fgfr1 and fgfr4. Interacts with rnd1, cdh1 and pcdh8. Interacts (via extracellular domain) with unc5b and unc5d (via extracellular domain). N-glycosylated. Post-translationally, proteolytic cleavage in the juxtamembrane region gives rise to a soluble ectodomain. Cleavage is probably effected by a metalloprotease.

It localises to the cell membrane. The protein localises to the endoplasmic reticulum membrane. The protein resides in the cell junction. Its subcellular location is the focal adhesion. It is found in the secreted. It localises to the cell projection. The protein localises to the axon. The protein resides in the growth cone membrane. Its function is as follows. Functions in cell-cell adhesion, cell migration and axon guidance, exerting an attractive or repulsive role depending on its interaction partners. Modulates cadherin-dependent cell-cell adhesion and cell sorting. Plays a role in the spatial organization of brain neurons. Plays a role in vascular development. Plays a role in cell-cell adhesion via its interaction with latrophilins that are expressed at the surface of adjacent cells. Mediates axon attraction towards cells expressing ntn1. mediates axon growth cone collapse and plays a repulsive role in neuron guidance via its interaction with unc-5 family members. Plays a role in the regulation of the density of glutamaergic synapses. Plays a role in signaling cascades downstream of fgfr1, and possibly also other fgfr family members. Plays a role in embryonic morphogenesis, but not in embryonic patterning. The chain is Leucine-rich repeat transmembrane protein FLRT3 from Xenopus tropicalis (Western clawed frog).